Consider the following 176-residue polypeptide: Woronin body major protein (176 aa).

The propeptide occupies 1–16 (MGYYDDDAHGHVEADA). The segment covering 1-16 (MGYYDDDAHGHVEADA) has biased composition (basic and acidic residues). Positions 1–31 (MGYYDDDAHGHVEADAAPRATTGTGTGSASQ) are disordered. The short motif at 174 to 176 (SRL) is the Microbody targeting signal element.

It belongs to the eIF-5A family. Hex1 subfamily. As to quaternary structure, forms oligomers. Self-assembles into hexagonal rods.

The protein resides in the cell septum. Its function is as follows. Major component of Woronin bodies, fungal-specific organelles that occlude septal pores in order to separate intact from damaged compartments. Hex-1 binds directly or indirectly to the Woronin body tether that in turn is anchored at the rim of the septal pore. This is Woronin body major protein from Neurospora crassa (strain ATCC 24698 / 74-OR23-1A / CBS 708.71 / DSM 1257 / FGSC 987).